The chain runs to 358 residues: MISFNNNYRKLRKAIINEDIEEIKYIIEKDPNMIVKVDNNNHTLLHIAIMYRKVNAVKVLLDKGDNLVYVINSFPILPPLYCAIIGFCKLTRRNKISNALEKINNHKKIIEALVDKGVELTGLEIALSCKNIWLIKFLIEKGISVEYTGFFPVGVNYNTIDIDICKVLLENKIDINKPVCGETLVRYAIRSSDLNLLKYLISKGADIEKRNKYEQDPNIIEAVEKGNLGIVEYLIDNGISIDTVSIYNHKPAIYYAILAGHYNMVDLLLRRGANPFITCEGNTSLISVATQAKRNRLKLINLLLKYGVRLPGDHDYYIQPILLDYSYETYNIIHILLEHGLRITSNTTLVSTFLIIRV.

ANK repeat units lie at residues 6–35 (NNYRKLRKAIINEDIEEIKYIIEKDPNMIV), 40–69 (NNHTLLHIAIMYRKVNAVKVLLDKGDNLVY), 91–118 (TRRNKISNALEKINNHKKIIEALVDKGV), 119–147 (ELTGLEIALSCKNIWLIKFLIEKGISVEY), 149–177 (GFFPVGVNYNTIDIDICKVLLENKIDINK), 180–209 (CGETLVRYAIRSSDLNLLKYLISKGADIEK), 214–243 (EQDPNIIEAVEKGNLGIVEYLIDNGISIDT), 248–277 (NHKPAIYYAILAGHYNMVDLLLRRGANPFI), 280–312 (EGNTSLISVATQAKRNRLKLINLLLKYGVRLPG), and 316–345 (YYIQPILLDYSYETYNIIHILLEHGLRITS).

The chain is Putative ankyrin repeat protein FPV242 from Fowlpox virus (strain NVSL) (FPV).